An 84-amino-acid chain; its full sequence is Small ribosomal subunit protein eS27 (84 aa).

Residues 1 to 16 (MPLAKDLLHPTPEEEK) show a composition bias toward basic and acidic residues. The interval 1 to 23 (MPLAKDLLHPTPEEEKRKHKKKR) is disordered. Residues 37 to 59 (CPGCYKITTVFSHAQTVVLCVGC) form a C4-type zinc finger.

This sequence belongs to the eukaryotic ribosomal protein eS27 family. In terms of assembly, component of the small ribosomal subunit. Part of the small subunit (SSU) processome, composed of more than 70 proteins and the RNA chaperone small nucleolar RNA (snoRNA) U3. The cofactor is Zn(2+).

Its subcellular location is the cytoplasm. The protein localises to the nucleus. It is found in the nucleolus. Its function is as follows. Component of the small ribosomal subunit. The ribosome is a large ribonucleoprotein complex responsible for the synthesis of proteins in the cell. Required for proper rRNA processing and maturation of 18S rRNAs. Part of the small subunit (SSU) processome, first precursor of the small eukaryotic ribosomal subunit. During the assembly of the SSU processome in the nucleolus, many ribosome biogenesis factors, an RNA chaperone and ribosomal proteins associate with the nascent pre-rRNA and work in concert to generate RNA folding, modifications, rearrangements and cleavage as well as targeted degradation of pre-ribosomal RNA by the RNA exosome. This is Small ribosomal subunit protein eS27 (rps27) from Xenopus laevis (African clawed frog).